Reading from the N-terminus, the 229-residue chain is UPF0758 protein MA_1979 (229 aa).

An MPN domain is found at 106 to 228 (KICSPKDVYA…YVSLKDEGFV (123 aa)). The Zn(2+) site is built by His177, His179, and Asp190. The JAMM motif motif lies at 177 to 190 (HNHPSGDPSPSRED).

The protein belongs to the UPF0758 family.

This is UPF0758 protein MA_1979 from Methanosarcina acetivorans (strain ATCC 35395 / DSM 2834 / JCM 12185 / C2A).